The primary structure comprises 429 residues: C4-dicarboxylate transport protein (429 aa).

8 consecutive transmembrane segments (helical) span residues 9-29 (VLYV…HFYP), 45-65 (LIKM…IAGM), 79-99 (LLYF…ATHI), 149-169 (GEIL…AHLG), 185-205 (VLFG…FGAM), 223-243 (LIGT…GTIA), 308-328 (IYMT…LTWM), and 356-376 (AATL…ILGI).

This sequence belongs to the dicarboxylate/amino acid:cation symporter (DAACS) (TC 2.A.23) family.

The protein localises to the cell inner membrane. In terms of biological role, responsible for the transport of dicarboxylates such as succinate, fumarate, and malate from the periplasm across the membrane. This chain is C4-dicarboxylate transport protein, found in Burkholderia ambifaria (strain ATCC BAA-244 / DSM 16087 / CCUG 44356 / LMG 19182 / AMMD) (Burkholderia cepacia (strain AMMD)).